The following is a 209-amino-acid chain: Ribosomal RNA large subunit methyltransferase E (209 aa).

Positions 63, 65, 83, 99, and 124 each coordinate S-adenosyl-L-methionine. Catalysis depends on lysine 164, which acts as the Proton acceptor.

It belongs to the class I-like SAM-binding methyltransferase superfamily. RNA methyltransferase RlmE family.

The protein resides in the cytoplasm. The catalysed reaction is uridine(2552) in 23S rRNA + S-adenosyl-L-methionine = 2'-O-methyluridine(2552) in 23S rRNA + S-adenosyl-L-homocysteine + H(+). Its function is as follows. Specifically methylates the uridine in position 2552 of 23S rRNA at the 2'-O position of the ribose in the fully assembled 50S ribosomal subunit. The protein is Ribosomal RNA large subunit methyltransferase E of Shewanella sp. (strain ANA-3).